Reading from the N-terminus, the 299-residue chain is Peroxisomal biogenesis factor 19 (299 aa).

Positions 1-63 (MAAAEEGCDA…SPGDTAKDAL (63 aa)) are disordered. At alanine 2 the chain carries N-acetylalanine. Positions 2-56 (AAAEEGCDAGVEADRELEELLESALDDFDKAKPSPAPPPTTSAPDASGPQKKSPG) are docking to the peroxisome membrane and binding to PEX3. The tract at residues 2–91 (AAAEEGCDAG…QATAEFEKAM (90 aa)) is necessary for PEX19 function on peroxisome biogenesis. Over residues 16–27 (RELEELLESALD) the composition is skewed to acidic residues. Residues serine 35, serine 54, and serine 66 each carry the phosphoserine modification. Threonine 236 carries the post-translational modification Phosphothreonine. Position 296 is a cysteine methyl ester (cysteine 296). Residue cysteine 296 is the site of S-farnesyl cysteine attachment. A propeptide spans 297–299 (LIM) (removed in mature form).

This sequence belongs to the peroxin-19 family. Interacts with a broad range of peroxisomal membrane proteins, including PEX3, PEX10, PEX11A, PEX11B, PEX12, PEX13, PEX14 and PEX16, PXMP2/PMP22, PXMP4/PMP24, SLC25A17/PMP34, ABCD1/ALDP, ABCD2/ALDRP, and ABCD3/PMP70. Also interacts with the tumor suppressor CDKN2A/p19ARF. As to expression, ubiquitous.

It localises to the cytoplasm. The protein resides in the peroxisome membrane. Functionally, necessary for early peroxisomal biogenesis. Acts both as a cytosolic chaperone and as an import receptor for peroxisomal membrane proteins (PMPs). Binds and stabilizes newly synthesized PMPs in the cytoplasm by interacting with their hydrophobic membrane-spanning domains, and targets them to the peroxisome membrane by binding to the integral membrane protein PEX3. Excludes CDKN2A from the nucleus and prevents its interaction with MDM2, which results in active degradation of TP53. This Cricetulus griseus (Chinese hamster) protein is Peroxisomal biogenesis factor 19 (PEX19).